The chain runs to 232 residues: MSLLNSVRNVIVPVHKEGYPFVAGFFVASLVLGWVFKPLFWIGLILTLWCAYFFRDPERMTAQDDDLAISPADGKVSGVQMVTPPAELNLGTEPMLRVSIFMNVFDCHVNRSPMRGRITNIAYRQGSFLNAELDKASEQNERNGLVIETKHGEIGVVQIAGLVARRILCFVNVNEPLDAGERIGLIRFGSRLDVFFPAGAEPRVAVGQRAIAGETIIAEFGSPKGPTVSRRS.

The active-site Schiff-base intermediate with substrate; via pyruvic acid is the serine 190. Serine 190 carries the post-translational modification Pyruvic acid (Ser); by autocatalysis.

This sequence belongs to the phosphatidylserine decarboxylase family. PSD-A subfamily. Heterodimer of a large membrane-associated beta subunit and a small pyruvoyl-containing alpha subunit. Pyruvate is required as a cofactor. In terms of processing, is synthesized initially as an inactive proenzyme. Formation of the active enzyme involves a self-maturation process in which the active site pyruvoyl group is generated from an internal serine residue via an autocatalytic post-translational modification. Two non-identical subunits are generated from the proenzyme in this reaction, and the pyruvate is formed at the N-terminus of the alpha chain, which is derived from the carboxyl end of the proenzyme. The post-translation cleavage follows an unusual pathway, termed non-hydrolytic serinolysis, in which the side chain hydroxyl group of the serine supplies its oxygen atom to form the C-terminus of the beta chain, while the remainder of the serine residue undergoes an oxidative deamination to produce ammonia and the pyruvoyl prosthetic group on the alpha chain.

The protein resides in the cell membrane. It catalyses the reaction a 1,2-diacyl-sn-glycero-3-phospho-L-serine + H(+) = a 1,2-diacyl-sn-glycero-3-phosphoethanolamine + CO2. Its pathway is phospholipid metabolism; phosphatidylethanolamine biosynthesis; phosphatidylethanolamine from CDP-diacylglycerol: step 2/2. Functionally, catalyzes the formation of phosphatidylethanolamine (PtdEtn) from phosphatidylserine (PtdSer). The protein is Phosphatidylserine decarboxylase proenzyme of Rhizobium rhizogenes (strain K84 / ATCC BAA-868) (Agrobacterium radiobacter).